The following is a 172-amino-acid chain: 3-hydroxydecanoyl-[acyl-carrier-protein] dehydratase (172 aa).

The active site involves H71.

The protein belongs to the thioester dehydratase family. FabA subfamily. In terms of assembly, homodimer.

It is found in the cytoplasm. The catalysed reaction is a (3R)-hydroxyacyl-[ACP] = a (2E)-enoyl-[ACP] + H2O. It carries out the reaction (3R)-hydroxydecanoyl-[ACP] = (2E)-decenoyl-[ACP] + H2O. It catalyses the reaction (2E)-decenoyl-[ACP] = (3Z)-decenoyl-[ACP]. Its pathway is lipid metabolism; fatty acid biosynthesis. In terms of biological role, necessary for the introduction of cis unsaturation into fatty acids. Catalyzes the dehydration of (3R)-3-hydroxydecanoyl-ACP to E-(2)-decenoyl-ACP and then its isomerization to Z-(3)-decenoyl-ACP. Can catalyze the dehydratase reaction for beta-hydroxyacyl-ACPs with saturated chain lengths up to 16:0, being most active on intermediate chain length. The polypeptide is 3-hydroxydecanoyl-[acyl-carrier-protein] dehydratase (Escherichia coli (strain 55989 / EAEC)).